The following is a 70-amino-acid chain: MAIQSKYTNTQVEALISELLAVLAKHQAPTDLSLMVLGNCVTHLLENKVPSESRQAVAEQFAKALVKSVK.

Belongs to the UPF0352 family.

This is UPF0352 protein Sden_2336 from Shewanella denitrificans (strain OS217 / ATCC BAA-1090 / DSM 15013).